Here is a 481-residue protein sequence, read N- to C-terminus: Ribulose bisphosphate carboxylase large chain (481 aa).

A propeptide spanning residues 1 to 2 is cleaved from the precursor; the sequence is MS. Pro-3 is subject to N-acetylproline. Position 14 is an N6,N6,N6-trimethyllysine (Lys-14). Substrate-binding residues include Asn-123 and Thr-173. Lys-175 serves as the catalytic Proton acceptor. Lys-177 is a substrate binding site. Mg(2+) is bound by residues Lys-201, Asp-203, and Glu-204. An N6-carboxylysine modification is found at Lys-201. His-294 functions as the Proton acceptor in the catalytic mechanism. Substrate is bound by residues Arg-295, His-327, and Ser-379.

It belongs to the RuBisCO large chain family. Type I subfamily. As to quaternary structure, heterohexadecamer of 8 large chains and 8 small chains; disulfide-linked. The disulfide link is formed within the large subunit homodimers. The cofactor is Mg(2+). Post-translationally, the disulfide bond which can form in the large chain dimeric partners within the hexadecamer appears to be associated with oxidative stress and protein turnover.

It localises to the plastid. The catalysed reaction is 2 (2R)-3-phosphoglycerate + 2 H(+) = D-ribulose 1,5-bisphosphate + CO2 + H2O. The enzyme catalyses D-ribulose 1,5-bisphosphate + O2 = 2-phosphoglycolate + (2R)-3-phosphoglycerate + 2 H(+). RuBisCO catalyzes two reactions: the carboxylation of D-ribulose 1,5-bisphosphate, the primary event in carbon dioxide fixation, as well as the oxidative fragmentation of the pentose substrate in the photorespiration process. Both reactions occur simultaneously and in competition at the same active site. The protein is Ribulose bisphosphate carboxylase large chain of Cuscuta sandwichiana (Kauna'oa).